The sequence spans 60 residues: Cytotoxin SP15d (60 aa).

4 disulfide bridges follow: Cys-3-Cys-21, Cys-14-Cys-38, Cys-42-Cys-53, and Cys-54-Cys-59.

It belongs to the three-finger toxin family. Short-chain subfamily. Type IA cytotoxin sub-subfamily. Monomer in solution; Homodimer and oligomer in the presence of negatively charged lipids forming a pore with a size ranging between 20 and 30 Angstroms. Expressed by the venom gland.

It is found in the secreted. Its subcellular location is the target cell membrane. Its function is as follows. Shows cytolytic activity on many different cells by forming pore in lipid membranes. In vivo, increases heart rate or kills the animal by cardiac arrest. In addition, it binds to heparin with high affinity, interacts with Kv channel-interacting protein 1 (KCNIP1) in a calcium-independent manner, and binds to integrin alpha-V/beta-3 (ITGAV/ITGB3) with moderate affinity. In Naja atra (Chinese cobra), this protein is Cytotoxin SP15d.